A 244-amino-acid polypeptide reads, in one-letter code: Chalcone--flavanone isomerase (244 aa).

Substrate is bound by residues Thr57, Asn122, and Ser199.

This sequence belongs to the chalcone isomerase family.

It catalyses the reaction a chalcone = a flavanone.. It functions in the pathway secondary metabolite biosynthesis; flavonoid biosynthesis. Catalyzes the intramolecular cyclization of bicyclic chalcones into tricyclic (S)-flavanones. Responsible for the isomerization of 4,2',4',6'-tetrahydroxychalcone (also termed chalcone) into naringenin. In Arabidopsis lyrata subsp. petraea (Northern rock-cress), this protein is Chalcone--flavanone isomerase (CHI).